The primary structure comprises 92 residues: Large ribosomal subunit protein bL27 (92 aa).

The propeptide occupies 1–9 (MIKANLQLF).

Belongs to the bacterial ribosomal protein bL27 family. In terms of processing, the N-terminus is cleaved by ribosomal processing cysteine protease Prp.

The sequence is that of Large ribosomal subunit protein bL27 from Acetivibrio thermocellus (strain ATCC 27405 / DSM 1237 / JCM 9322 / NBRC 103400 / NCIMB 10682 / NRRL B-4536 / VPI 7372) (Clostridium thermocellum).